Reading from the N-terminus, the 256-residue chain is 4-hydroxy-tetrahydrodipicolinate reductase (256 aa).

8-13 contacts NAD(+); sequence GATGRV. Lys36 lines the NADP(+) pocket. NAD(+) contacts are provided by residues 89 to 91 and 113 to 116; these read GTT and ATNM. Catalysis depends on His145, which acts as the Proton donor/acceptor. His146 is a binding site for (S)-2,3,4,5-tetrahydrodipicolinate. Residue Lys149 is the Proton donor of the active site. Residue 155-156 coordinates (S)-2,3,4,5-tetrahydrodipicolinate; sequence GT.

Belongs to the DapB family.

It localises to the cytoplasm. It catalyses the reaction (S)-2,3,4,5-tetrahydrodipicolinate + NAD(+) + H2O = (2S,4S)-4-hydroxy-2,3,4,5-tetrahydrodipicolinate + NADH + H(+). It carries out the reaction (S)-2,3,4,5-tetrahydrodipicolinate + NADP(+) + H2O = (2S,4S)-4-hydroxy-2,3,4,5-tetrahydrodipicolinate + NADPH + H(+). It participates in amino-acid biosynthesis; L-lysine biosynthesis via DAP pathway; (S)-tetrahydrodipicolinate from L-aspartate: step 4/4. Functionally, catalyzes the conversion of 4-hydroxy-tetrahydrodipicolinate (HTPA) to tetrahydrodipicolinate. This is 4-hydroxy-tetrahydrodipicolinate reductase from Wolinella succinogenes (strain ATCC 29543 / DSM 1740 / CCUG 13145 / JCM 31913 / LMG 7466 / NCTC 11488 / FDC 602W) (Vibrio succinogenes).